Reading from the N-terminus, the 163-residue chain is Putative 4-hydroxy-4-methyl-2-oxoglutarate aldolase (163 aa).

Substrate is bound by residues 76-79 (GDMI) and R98. D99 is a binding site for a divalent metal cation.

This sequence belongs to the class II aldolase/RraA-like family. As to quaternary structure, homotrimer. Requires a divalent metal cation as cofactor.

The catalysed reaction is 4-hydroxy-4-methyl-2-oxoglutarate = 2 pyruvate. It catalyses the reaction oxaloacetate + H(+) = pyruvate + CO2. Functionally, catalyzes the aldol cleavage of 4-hydroxy-4-methyl-2-oxoglutarate (HMG) into 2 molecules of pyruvate. Also contains a secondary oxaloacetate (OAA) decarboxylase activity due to the common pyruvate enolate transition state formed following C-C bond cleavage in the retro-aldol and decarboxylation reactions. The polypeptide is Putative 4-hydroxy-4-methyl-2-oxoglutarate aldolase (Pseudomonas fluorescens (strain SBW25)).